Consider the following 1005-residue polypeptide: DNA double-strand break repair Rad50 ATPase (1005 aa).

ATP is bound by residues Lys14, 35–40 (GSGKSS), 62–64 (ITK), and Gln134. Coiled coils occupy residues 189 to 230 (KENY…IEKL), 292 to 321 (LVDEIRKIESRLRELKSHYEDYLKLTKQLE), 346 to 379 (LDTLLNKIKDEIERVETIKDLLEELKNLNEEIEK), and 404 to 498 (AVEY…LKEV). The Zinc-hook domain occupies 457–554 (IEEKKKVLEN…DIEKLKKEID (98 aa)). Cys502 and Cys505 together coordinate Zn(2+). 3 coiled-coil regions span residues 523 to 600 (TQLN…YVIN), 656 to 692 (KEKCREELNKLREDEREINRLKDKLNELKNKEKELIE), and 800 to 834 (RQELDNVREQKTEIETGIEYLKKDVESLKARLKEM).

This sequence belongs to the SMC family. RAD50 subfamily. Homodimer. Forms a heterotetramer composed of two Mre11 subunits and two Rad50 subunits. Requires Zn(2+) as cofactor.

Its function is as follows. Part of the Rad50/Mre11 complex, which is involved in the early steps of DNA double-strand break (DSB) repair. The complex may facilitate opening of the processed DNA ends to aid in the recruitment of HerA and NurA. Rad50 controls the balance between DNA end bridging and DNA resection via ATP-dependent structural rearrangements of the Rad50/Mre11 complex. The polypeptide is DNA double-strand break repair Rad50 ATPase (Methanocaldococcus jannaschii (strain ATCC 43067 / DSM 2661 / JAL-1 / JCM 10045 / NBRC 100440) (Methanococcus jannaschii)).